Consider the following 363-residue polypeptide: Peptide chain release factor 1 (363 aa).

Gln237 bears the N5-methylglutamine mark. The tract at residues 281–302 (QQAEDEKSHAEEQTIRRSLVAS) is disordered. Residues 282-295 (QAEDEKSHAEEQTI) show a composition bias toward basic and acidic residues.

The protein belongs to the prokaryotic/mitochondrial release factor family. Post-translationally, methylated by PrmC. Methylation increases the termination efficiency of RF1.

It is found in the cytoplasm. Functionally, peptide chain release factor 1 directs the termination of translation in response to the peptide chain termination codons UAG and UAA. The chain is Peptide chain release factor 1 from Psychromonas ingrahamii (strain DSM 17664 / CCUG 51855 / 37).